A 317-amino-acid polypeptide reads, in one-letter code: L-lactate dehydrogenase 2 (317 aa).

NAD(+) contacts are provided by residues Val16, Asp37, Lys42, Tyr68, and 82–83 (GA). Residues Gln85 and Arg91 each coordinate substrate. NAD(+) is bound by residues Thr104, 121–123 (ASN), and Thr146. 123–126 (NPVD) lines the substrate pocket. 151 to 154 (DTTR) provides a ligand contact to substrate. The beta-D-fructose 1,6-bisphosphate site is built by Arg156 and His171. His178 serves as the catalytic Proton acceptor. The residue at position 223 (Tyr223) is a Phosphotyrosine. Thr232 contacts substrate.

This sequence belongs to the LDH/MDH superfamily. LDH family. As to quaternary structure, homotetramer.

The protein resides in the cytoplasm. The catalysed reaction is (S)-lactate + NAD(+) = pyruvate + NADH + H(+). The protein operates within fermentation; pyruvate fermentation to lactate; (S)-lactate from pyruvate: step 1/1. With respect to regulation, allosterically activated by fructose 1,6-bisphosphate (FBP). Its function is as follows. Catalyzes the conversion of lactate to pyruvate. This is L-lactate dehydrogenase 2 from Enterococcus faecalis (strain ATCC 700802 / V583).